Here is a 372-residue protein sequence, read N- to C-terminus: Saccharopine dehydrogenase [NAD(+), L-lysine-forming] (372 aa).

L-saccharopine is bound by residues arginine 17 and lysine 76. The active-site Proton acceptor is the lysine 76. Catalysis depends on histidine 95, which acts as the Proton donor. Glutamine 100 is an L-saccharopine binding site. Arginine 129 is a binding site for NAD(+). Positions 130 and 134 each coordinate L-saccharopine. NAD(+)-binding positions include 202–203 (GR), aspartate 226, threonine 230, tyrosine 250, and valine 277. Cysteines 204 and 248 form a disulfide. 278–280 (SAD) lines the L-saccharopine pocket. 317 to 320 (IDHL) is an NAD(+) binding site. The short motif at 370–372 (SKL) is the Microbody targeting signal element.

The protein belongs to the AlaDH/PNT family. As to quaternary structure, monomer.

The protein localises to the peroxisome. The catalysed reaction is L-saccharopine + NAD(+) + H2O = L-lysine + 2-oxoglutarate + NADH + H(+). It participates in amino-acid biosynthesis; L-lysine biosynthesis via AAA pathway; L-lysine from L-alpha-aminoadipate (fungal route): step 3/3. In terms of biological role, catalyzes the NAD(+)-dependent cleavage of saccharopine to L-lysine and 2-oxoglutarate, the final step in the alpha-aminoadipate (AAA) pathway for lysin biosynthesis. This chain is Saccharopine dehydrogenase [NAD(+), L-lysine-forming] (LYS1), found in Candida glabrata (strain ATCC 2001 / BCRC 20586 / JCM 3761 / NBRC 0622 / NRRL Y-65 / CBS 138) (Yeast).